The primary structure comprises 430 residues: MKDYLEIVDVVARQILDSRCFPTVEVEIYLEDGTIGRAAVPSGASTGMYEAVELRDGDKDKFLGKGVLNAIRNVNEIIAEELIGCNVFEQTYIDKMLIELDGTNNKSKLGANAILGVSLAVANAAANSLDMPLYRYIGGVNSKVLPVPMMNILNGGSHADNSVDLQEFMIMPAGAPTFSEALRMCAEVYHTLKKILNDKGYSTGIGDEGGFAPNLKSNQEALDVIIEAIGKAGYKAGEEIFIAIDAASSEYYKDGKYVLEHEGRTLTSAEMVDFFEDWVNKYPIISIEDGMAEEDWEGWKLITERLGKKVQLVGDDLFVTNTERLEKGIDLGVANSILIKLNQIGTLTETLNAIEMANRAGYTAVVSHRSGETEDTTIADLVVAVNAGQIKTGAPARSERVAKYNQLLRIEEELNDVAEYRGRKAFFNIK.

A (2R)-2-phosphoglycerate-binding site is contributed by Gln166. The active-site Proton donor is Glu208. Mg(2+)-binding residues include Asp245, Glu288, and Asp315. Residues Lys340, Arg369, Ser370, and Lys391 each contribute to the (2R)-2-phosphoglycerate site. The active-site Proton acceptor is the Lys340.

It belongs to the enolase family. The cofactor is Mg(2+).

The protein resides in the cytoplasm. The protein localises to the secreted. Its subcellular location is the cell surface. The catalysed reaction is (2R)-2-phosphoglycerate = phosphoenolpyruvate + H2O. The protein operates within carbohydrate degradation; glycolysis; pyruvate from D-glyceraldehyde 3-phosphate: step 4/5. Its function is as follows. Catalyzes the reversible conversion of 2-phosphoglycerate (2-PG) into phosphoenolpyruvate (PEP). It is essential for the degradation of carbohydrates via glycolysis. The chain is Enolase from Clostridium beijerinckii (strain ATCC 51743 / NCIMB 8052) (Clostridium acetobutylicum).